The chain runs to 470 residues: Siroheme synthase 2 (470 aa).

Residues 1–202 (MDYLPMFAKL…EDWQGAEQWL (202 aa)) are precorrin-2 dehydrogenase /sirohydrochlorin ferrochelatase. Residues 22 to 23 (EV) and 43 to 44 (PE) contribute to the NAD(+) site. At Ser126 the chain carries Phosphoserine. The uroporphyrinogen-III C-methyltransferase stretch occupies residues 214-470 (GEVVLVGAGP…TCDLKLVSLA (257 aa)). Pro223 is a binding site for S-adenosyl-L-methionine. Asp246 serves as the catalytic Proton acceptor. Lys268 acts as the Proton donor in catalysis. S-adenosyl-L-methionine is bound by residues 299-301 (GGD), 329-330 (TA), Met381, and Gly410.

This sequence in the N-terminal section; belongs to the precorrin-2 dehydrogenase / sirohydrochlorin ferrochelatase family. In the C-terminal section; belongs to the precorrin methyltransferase family.

It carries out the reaction uroporphyrinogen III + 2 S-adenosyl-L-methionine = precorrin-2 + 2 S-adenosyl-L-homocysteine + H(+). It catalyses the reaction precorrin-2 + NAD(+) = sirohydrochlorin + NADH + 2 H(+). The catalysed reaction is siroheme + 2 H(+) = sirohydrochlorin + Fe(2+). The protein operates within cofactor biosynthesis; adenosylcobalamin biosynthesis; precorrin-2 from uroporphyrinogen III: step 1/1. It participates in cofactor biosynthesis; adenosylcobalamin biosynthesis; sirohydrochlorin from precorrin-2: step 1/1. Its pathway is porphyrin-containing compound metabolism; siroheme biosynthesis; precorrin-2 from uroporphyrinogen III: step 1/1. It functions in the pathway porphyrin-containing compound metabolism; siroheme biosynthesis; siroheme from sirohydrochlorin: step 1/1. The protein operates within porphyrin-containing compound metabolism; siroheme biosynthesis; sirohydrochlorin from precorrin-2: step 1/1. In terms of biological role, multifunctional enzyme that catalyzes the SAM-dependent methylations of uroporphyrinogen III at position C-2 and C-7 to form precorrin-2 via precorrin-1. Then it catalyzes the NAD-dependent ring dehydrogenation of precorrin-2 to yield sirohydrochlorin. Finally, it catalyzes the ferrochelation of sirohydrochlorin to yield siroheme. The protein is Siroheme synthase 2 of Aeromonas hydrophila subsp. hydrophila (strain ATCC 7966 / DSM 30187 / BCRC 13018 / CCUG 14551 / JCM 1027 / KCTC 2358 / NCIMB 9240 / NCTC 8049).